The primary structure comprises 167 residues: NAD(P)H-quinone oxidoreductase subunit I, chloroplastic (167 aa).

4Fe-4S ferredoxin-type domains follow at residues 55–84 and 95–124; these read GRIHFEFDKCIACEVCVRVCPINLPVVDWI and KNYSIDFGVCIFCGNCVEYCPTNCLSMTEE. Residues C64, C67, C70, C74, C104, C107, C110, and C114 each contribute to the [4Fe-4S] cluster site.

This sequence belongs to the complex I 23 kDa subunit family. NDH is composed of at least 16 different subunits, 5 of which are encoded in the nucleus. [4Fe-4S] cluster is required as a cofactor.

The protein resides in the plastid. It localises to the chloroplast thylakoid membrane. It carries out the reaction a plastoquinone + NADH + (n+1) H(+)(in) = a plastoquinol + NAD(+) + n H(+)(out). The catalysed reaction is a plastoquinone + NADPH + (n+1) H(+)(in) = a plastoquinol + NADP(+) + n H(+)(out). In terms of biological role, NDH shuttles electrons from NAD(P)H:plastoquinone, via FMN and iron-sulfur (Fe-S) centers, to quinones in the photosynthetic chain and possibly in a chloroplast respiratory chain. The immediate electron acceptor for the enzyme in this species is believed to be plastoquinone. Couples the redox reaction to proton translocation, and thus conserves the redox energy in a proton gradient. This Adiantum capillus-veneris (Maidenhair fern) protein is NAD(P)H-quinone oxidoreductase subunit I, chloroplastic.